Consider the following 1071-residue polypeptide: Myosin IF heavy chain (1071 aa).

The 697-residue stretch at 40–736 (VGLTDMCFLE…TLFHFEELRQ (697 aa)) folds into the Myosin motor domain. 134 to 141 (GESGSGKT) contributes to the ATP binding site. The tract at residues 610–632 (INDLIGKLNTCQPHYIRCIKSNE) is actin-binding. The 30-residue stretch at 739-768 (LPSIVITIQRVWRGYKVRKWYKQELQRLRE) folds into the IQ domain. Residues 870-1069 (SRKKEWDCRR…KGNTAIVYYN (200 aa)) enclose the TH1 domain.

Belongs to the TRAFAC class myosin-kinesin ATPase superfamily. Myosin family. As to quaternary structure, myosin I heavy chain is single-headed. Dimer of a heavy and a light chain. Inability to self-assemble into filaments.

Functionally, myosin is a protein that binds to actin and has ATPase activity that is activated by actin. The polypeptide is Myosin IF heavy chain (myoF) (Dictyostelium discoideum (Social amoeba)).